A 62-amino-acid polypeptide reads, in one-letter code: Alkaline proteinase (62 aa).

Residues Gly-1–Ser-62 enclose the Peptidase S8 domain. Asp-21 (charge relay system) is an active-site residue.

It is found in the secreted. Inhibited by phenylmethanesulfonyl fluoride (PMSF) and chymostatin (CST), but not by Bowman-Birk type trypsin-chymotrypsin inhibitor (BBI). Serine protease. May be involved in the invasion of grains and hydrolysis of grain proteins. This Fusarium culmorum protein is Alkaline proteinase.